The sequence spans 295 residues: Glycine--tRNA ligase alpha subunit (295 aa).

The protein belongs to the class-II aminoacyl-tRNA synthetase family. As to quaternary structure, tetramer of two alpha and two beta subunits.

It localises to the cytoplasm. The enzyme catalyses tRNA(Gly) + glycine + ATP = glycyl-tRNA(Gly) + AMP + diphosphate. The chain is Glycine--tRNA ligase alpha subunit (glyQ) from Bacillus subtilis (strain 168).